Here is a 2157-residue protein sequence, read N- to C-terminus: Mediator of RNA polymerase II transcription subunit 12-like protein (2157 aa).

Positions 1 to 31 are disordered; the sequence is MAAFGLLSYEQRPLKRPRLGPPDVYPQDPKQ. T462 is modified (phosphothreonine). Residues 1437–1456 are compositionally biased toward basic and acidic residues; sequence ELEKGQHLGSSSKKERDRQK. Disordered regions lie at residues 1437–1461, 1724–1807, and 2040–2157; these read ELEKGQHLGSSSKKERDRQKQKSMS, RSYY…SQMT, and IDAV…PSHF. The span at 1771 to 1780 shows a compositional bias: basic residues; that stretch reads TKGRKRKTKS. Low complexity-rich tracts occupy residues 2063-2076, 2083-2101, and 2116-2136; these read PRQQQVRQQQRLLQ, QQPQQAPQPQQPSQTQSQA, and RQGLQQTQQQQQTAALVRQLQ. The span at 2137–2148 shows a compositional bias: polar residues; it reads KQLSSNQPQQGV.

This sequence belongs to the Mediator complex subunit 12 family. In terms of assembly, may be a component of the Mediator complex, which is known to be composed of MED1, MED4, MED6, MED7, MED8, MED9, MED10, MED11, MED12, MED13, MED13L, MED14, MED15, MED16, MED17, MED18, MED19, MED20, MED21, MED22, MED23, MED24, MED25, MED26, MED27, MED29, MED30, MED31, CCNC, CDK8 and CDC2L6/CDK11. The MED12, MED13, CCNC and CDK8 subunits form a distinct module termed the CDK8 module. Mediator containing the CDK8 module is less active than Mediator lacking this module in supporting transcriptional activation. Individual preparations of the Mediator complex lacking one or more distinct subunits have been variously termed ARC, CRSP, DRIP, PC2, SMCC and TRAP.

It localises to the nucleus. Functionally, may be a component of the Mediator complex, a coactivator involved in the regulated transcription of nearly all RNA polymerase II-dependent genes. Mediator functions as a bridge to convey information from gene-specific regulatory proteins to the basal RNA polymerase II transcription machinery. Mediator is recruited to promoters by direct interactions with regulatory proteins and serves as a scaffold for the assembly of a functional preinitiation complex with RNA polymerase II and the general transcription factors. The protein is Mediator of RNA polymerase II transcription subunit 12-like protein (Med12l) of Mus musculus (Mouse).